A 157-amino-acid chain; its full sequence is Prefoldin subunit alpha (157 aa).

The protein belongs to the prefoldin subunit alpha family. In terms of assembly, heterohexamer of two alpha and four beta subunits.

The protein localises to the cytoplasm. In terms of biological role, molecular chaperone capable of stabilizing a range of proteins. Seems to fulfill an ATP-independent, HSP70-like function in archaeal de novo protein folding. This is Prefoldin subunit alpha from Methanopyrus kandleri (strain AV19 / DSM 6324 / JCM 9639 / NBRC 100938).